The chain runs to 448 residues: C4-dicarboxylate transport protein (448 aa).

The next 7 membrane-spanning stretches (helical) occupy residues 22–42 (FQVVVAIVLGALLGHFEPAFA), 55–75 (LVKMIIAPVIFLTIVTGIAGM), 90–110 (TYFLFFSTLALIVGMVVAHVV), 137–157 (ELSLVGFLMDIIPATLISAFV), 159–179 (GNILQVLFVAVLFGIALALVG), 199–219 (LVHMLMKAAPIGAFGAIAFTI), and 232–252 (WLVGSFYLTSLFFVLVILGIV). The tract at residues 428-448 (RAPPLQAPVPPPDAVAPVSAR) is disordered. Residues 432–441 (LQAPVPPPDA) show a composition bias toward pro residues.

Belongs to the dicarboxylate/amino acid:cation symporter (DAACS) (TC 2.A.23) family.

The protein resides in the cell inner membrane. Its function is as follows. Responsible for the transport of dicarboxylates such as succinate, fumarate, and malate from the periplasm across the membrane. This Xanthomonas campestris pv. campestris (strain 8004) protein is C4-dicarboxylate transport protein.